Here is a 317-residue protein sequence, read N- to C-terminus: Acetyl-coenzyme A carboxylase carboxyl transferase subunit alpha (317 aa).

Positions arginine 39–glycine 293 constitute a CoA carboxyltransferase C-terminal domain.

Belongs to the AccA family. Acetyl-CoA carboxylase is a heterohexamer composed of biotin carboxyl carrier protein (AccB), biotin carboxylase (AccC) and two subunits each of ACCase subunit alpha (AccA) and ACCase subunit beta (AccD).

The protein localises to the cytoplasm. It carries out the reaction N(6)-carboxybiotinyl-L-lysyl-[protein] + acetyl-CoA = N(6)-biotinyl-L-lysyl-[protein] + malonyl-CoA. The protein operates within lipid metabolism; malonyl-CoA biosynthesis; malonyl-CoA from acetyl-CoA: step 1/1. Component of the acetyl coenzyme A carboxylase (ACC) complex. First, biotin carboxylase catalyzes the carboxylation of biotin on its carrier protein (BCCP) and then the CO(2) group is transferred by the carboxyltransferase to acetyl-CoA to form malonyl-CoA. The sequence is that of Acetyl-coenzyme A carboxylase carboxyl transferase subunit alpha from Methylobacterium nodulans (strain LMG 21967 / CNCM I-2342 / ORS 2060).